Here is a 272-residue protein sequence, read N- to C-terminus: Indole-3-glycerol phosphate synthase (272 aa).

Belongs to the TrpC family.

The catalysed reaction is 1-(2-carboxyphenylamino)-1-deoxy-D-ribulose 5-phosphate + H(+) = (1S,2R)-1-C-(indol-3-yl)glycerol 3-phosphate + CO2 + H2O. Its pathway is amino-acid biosynthesis; L-tryptophan biosynthesis; L-tryptophan from chorismate: step 4/5. The polypeptide is Indole-3-glycerol phosphate synthase (Arthrobacter sp. (strain FB24)).